A 310-amino-acid chain; its full sequence is Ribosomal RNA small subunit methyltransferase H (310 aa).

S-adenosyl-L-methionine is bound by residues 33-35 (AGH), D53, F79, D100, and Q107.

The protein belongs to the methyltransferase superfamily. RsmH family.

It is found in the cytoplasm. The enzyme catalyses cytidine(1402) in 16S rRNA + S-adenosyl-L-methionine = N(4)-methylcytidine(1402) in 16S rRNA + S-adenosyl-L-homocysteine + H(+). Functionally, specifically methylates the N4 position of cytidine in position 1402 (C1402) of 16S rRNA. This is Ribosomal RNA small subunit methyltransferase H from Clostridium perfringens (strain 13 / Type A).